The sequence spans 416 residues: tRNA (guanine-N(7)-)-methyltransferase non-catalytic subunit wuho (416 aa).

The interval Thr-47–Val-88 is disordered. Positions Ser-49–Ala-62 are enriched in polar residues. WD repeat units lie at residues Ala-89–Leu-130, Gly-177–Ser-216, Gly-220–Gln-258, and Ala-317–Asn-357.

Belongs to the WD repeat TRM82 family. In terms of assembly, forms a heterodimer with the catalytic subunit Mettl1. Interacts with mei-P26 and weakly interacts with bgcn; required for the function or formation of the mei-P26-bgcn-bam-sxl complex. Interacts with nanos; may be involved in mei-P26-dependent derepression of the BMP signaling pathway. Interacts with Myc; the interaction may be mediated by mei-P26 and may be involved in the regulation of ribosome biogenesis. In terms of tissue distribution, in testis, it is present at high level in hub cells, a niche for germline stem cells of testis. Ubiquitously expressed in all testicular cells throughout spermatogenesis. Ubiquitously expressed in all germline and somatic cells of the ovary.

The protein localises to the nucleus. Its subcellular location is the cytoplasm. It participates in tRNA modification; N(7)-methylguanine-tRNA biosynthesis. In terms of biological role, required for the Mettl1-dependent formation of N(7)-methylguanine at position 46 (m7G46) in tRNA. In the Mettl1-wuho methyltransferase complex, it is required to stabilize and induce conformational changes of the catalytic subunit. Required for binding of nanos mRNA and repression of translation by the mei-P26-bgcn-bam-sxl complex. May cooperate with mei-P26 and nanos to derepress the BMP signaling pathway. May cooperate with mei-P26 to suppress expression of a subset of microRNAs. May cooperate with mei-P26 to regulate bam expression levels in germline cells during gametogenesis. Required to promote mitosis to meiosis transition during gametogenesis. May regulate germline cell division in part by regulating ribosome biogenesis. This chain is tRNA (guanine-N(7)-)-methyltransferase non-catalytic subunit wuho, found in Drosophila erecta (Fruit fly).